A 261-amino-acid chain; its full sequence is Cytochrome c oxidase subunit 3 (261 aa).

The Mitochondrial matrix segment spans residues 1–15; that stretch reads MAHQAHAYHMVDPSP. A helical transmembrane segment spans residues 16-34; sequence WPLTGAVAALLLTSGLAVW. At 35–40 the chain is on the mitochondrial intermembrane side; the sequence is FHFKSL. A helical membrane pass occupies residues 41-66; the sequence is TLLAMGLLLMILTMIQWWRDIIREGT. At 67–72 the chain is on the mitochondrial matrix side; that stretch reads FQGHHT. A helical membrane pass occupies residues 73–105; the sequence is PPVQKGLRYGMILFITSEVFFFLGFFWAFYHSS. At 106-128 the chain is on the mitochondrial intermembrane side; sequence LAPTPELGGIWPPTGITPLDPFE. A helical membrane pass occupies residues 129-152; sequence VPLLNTAVLLASGVTVTWTHHSLM. Over 153–155 the chain is Mitochondrial matrix; that stretch reads EGK. The chain crosses the membrane as a helical span at residues 156 to 183; it reads RTEATQALTLTILLGLYFTALQAMEYYE. Residues 184–190 lie on the Mitochondrial intermembrane side of the membrane; that stretch reads APFTIAD. The helical transmembrane segment at 191–223 threads the bilayer; the sequence is GVYGTTFFVATGFHGLHVIIGSTFLAGCLLRQI. Over 224 to 232 the chain is Mitochondrial matrix; sequence LYHFTSSHH. The chain crosses the membrane as a helical span at residues 233-256; the sequence is FGFEAAAWYWHFVDVVWLFLYVSI. Over 257–261 the chain is Mitochondrial intermembrane; the sequence is YWWGS.

It belongs to the cytochrome c oxidase subunit 3 family. As to quaternary structure, component of the cytochrome c oxidase (complex IV, CIV), a multisubunit enzyme composed of 14 subunits. The complex is composed of a catalytic core of 3 subunits MT-CO1, MT-CO2 and MT-CO3, encoded in the mitochondrial DNA, and 11 supernumerary subunits COX4I, COX5A, COX5B, COX6A, COX6B, COX6C, COX7A, COX7B, COX7C, COX8 and NDUFA4, which are encoded in the nuclear genome. The complex exists as a monomer or a dimer and forms supercomplexes (SCs) in the inner mitochondrial membrane with NADH-ubiquinone oxidoreductase (complex I, CI) and ubiquinol-cytochrome c oxidoreductase (cytochrome b-c1 complex, complex III, CIII), resulting in different assemblies (supercomplex SCI(1)III(2)IV(1) and megacomplex MCI(2)III(2)IV(2)).

Its subcellular location is the mitochondrion inner membrane. It catalyses the reaction 4 Fe(II)-[cytochrome c] + O2 + 8 H(+)(in) = 4 Fe(III)-[cytochrome c] + 2 H2O + 4 H(+)(out). In terms of biological role, component of the cytochrome c oxidase, the last enzyme in the mitochondrial electron transport chain which drives oxidative phosphorylation. The respiratory chain contains 3 multisubunit complexes succinate dehydrogenase (complex II, CII), ubiquinol-cytochrome c oxidoreductase (cytochrome b-c1 complex, complex III, CIII) and cytochrome c oxidase (complex IV, CIV), that cooperate to transfer electrons derived from NADH and succinate to molecular oxygen, creating an electrochemical gradient over the inner membrane that drives transmembrane transport and the ATP synthase. Cytochrome c oxidase is the component of the respiratory chain that catalyzes the reduction of oxygen to water. Electrons originating from reduced cytochrome c in the intermembrane space (IMS) are transferred via the dinuclear copper A center (CU(A)) of subunit 2 and heme A of subunit 1 to the active site in subunit 1, a binuclear center (BNC) formed by heme A3 and copper B (CU(B)). The BNC reduces molecular oxygen to 2 water molecules using 4 electrons from cytochrome c in the IMS and 4 protons from the mitochondrial matrix. The polypeptide is Cytochrome c oxidase subunit 3 (mt-co3) (Polypterus ornatipinnis (Ornate bichir)).